A 125-amino-acid polypeptide reads, in one-letter code: MTERLPPELQTELVKLQQLQEQLNRVIAERSVIDSQLREVNKVLDELKQLPSDTIIYKIVGNLLVKVNKDNVEKELDDQKTILELRSRTYQNQETKLRTQLEEKQKKVNEMLSKYYPQRGAGAKA.

The protein belongs to the prefoldin subunit beta family. In terms of assembly, heterohexamer of two alpha and four beta subunits.

It is found in the cytoplasm. Functionally, molecular chaperone capable of stabilizing a range of proteins. Seems to fulfill an ATP-independent, HSP70-like function in archaeal de novo protein folding. This chain is Prefoldin subunit beta, found in Sulfolobus acidocaldarius (strain ATCC 33909 / DSM 639 / JCM 8929 / NBRC 15157 / NCIMB 11770).